The sequence spans 859 residues: MGEVTAEEVEKFLDSNVSFAKQYYNLRYRAKVISDLLGPREAAVDFSNYHALNSVEESEIIFDLLRDFQDNLQAEKCVFNVMKKLCFLLQADRMSLFMYRARNGIAELATRLFNVHKDAVLEECLVAPDSEIVFPLDMGVVGHVALSKKIVNVPNTEEDEHFCDFVDTLTEYQTKNILASPIMNGKDVVAIIMVVNKVDGPHFTENDEEILLKYLNFANLIMKVFHLSYLHNCETRRGQILLWSGSKVFEELTDIERQFHKALYTVRAFLNCDRYSVGLLDMTKQKEFFDVWPVLMGEAPPYAGPRTPDGREINFYKVIDYILHGKEDIKVIPNPPPDHWALVSGLPTYVAQNGLICNIMNAPSEDFFAFQKEPLDESGWMIKNVLSMPIVNKKEEIVGVATFYNRKDGKPFDEMDETLMESLTQFLGWSVLNPDTYELMNKLENRKDIFQDMVKYHVKCDNEEIQTILKTREVYGKEPWECEEEELAEILQGELPDADKYEINKFHFSDLPLTELELVKCGIQMYYELKVVDKFHIPQEALVRFMYSLSKGYRRITYHNWRHGFNVGQTMFSLLVTGKLKRYFTDLEALAMVTAAFCHDIDHRGTNNLYQMKSQNPLAKLHGSSILERHHLEFGKTLLRDESLNIFQNLNRRQHEHAIHMMDIAIIATDLALYFKKRTMFQKIVDQSKTYETQQEWTQYMMLDQTRKEIVMAMMMTACDLSAITKPWEVQSKVALLVAAEFWEQGDLERTVLQQNPIPMMDRNKADELPKLQVGFIDFVCTFVYKEFSRFHEEITPMLDGITNNRKEWKALADEYETKMKGLEEEKQKQQAANQAAAGSQHGGKQPGGGPASKSCCVQ.

Glycine 2 carries the post-translational modification N-acetylglycine. GAF domains are found at residues 73-222 and 254-431; these read QAEK…NLIM and DIER…GWSV. Residues 483 to 816 enclose the PDEase domain; that stretch reads EEEELAEILQ…KEWKALADEY (334 aa). The Proton donor role is filled by histidine 559. Residues histidine 563, histidine 599, aspartate 600, and aspartate 720 each coordinate a divalent metal cation. A disordered region spans residues 821–859; that stretch reads KGLEEEKQKQQAANQAAAGSQHGGKQPGGGPASKSCCVQ. The segment covering 830–840 has biased composition (low complexity); the sequence is QQAANQAAAGS. A compositionally biased stretch (gly residues) spans 841–851; sequence QHGGKQPGGGP. Cysteine 856 is subject to Cysteine methyl ester. Cysteine 856 is lipidated: S-farnesyl cysteine. Positions 857–859 are cleaved as a propeptide — removed in mature form; the sequence is CVQ.

This sequence belongs to the cyclic nucleotide phosphodiesterase family. As to quaternary structure, oligomer composed of two catalytic chains (alpha and beta), an inhibitory chain (gamma) and the delta chain. A divalent metal cation serves as cofactor.

It localises to the cell membrane. It is found in the cell projection. The protein localises to the cilium. The protein resides in the photoreceptor outer segment. It carries out the reaction 3',5'-cyclic GMP + H2O = GMP + H(+). In terms of biological role, rod-specific cGMP phosphodiesterase that catalyzes the hydrolysis of 3',5'-cyclic GMP. This protein participates in processes of transmission and amplification of the visual signal. This chain is Rod cGMP-specific 3',5'-cyclic phosphodiesterase subunit alpha, found in Bos taurus (Bovine).